The chain runs to 245 residues: NAD-dependent protein deacetylase (245 aa).

The Deacetylase sirtuin-type domain occupies 1–245 (MLLLDKINEL…SIGKVLETVI (245 aa)). NAD(+) is bound by residues Ala-26, Thr-30, Phe-37, Arg-38, Gln-107, Ile-109, Asp-110, and His-125. Phe-37 provides a ligand contact to nicotinamide. The nicotinamide site is built by Ile-109 and Asp-110. The Proton acceptor role is filled by His-125. Residues Cys-133, Cys-136, Cys-155, and Cys-158 each coordinate Zn(2+). NAD(+)-binding residues include Thr-196, Ser-197, Asn-219, and Ile-237.

Belongs to the sirtuin family. Class U subfamily. The cofactor is Zn(2+).

The protein resides in the cytoplasm. It carries out the reaction N(6)-acetyl-L-lysyl-[protein] + NAD(+) + H2O = 2''-O-acetyl-ADP-D-ribose + nicotinamide + L-lysyl-[protein]. Functionally, NAD-dependent protein deacetylase which modulates the activities of several enzymes which are inactive in their acetylated form. In Clostridium acetobutylicum (strain ATCC 824 / DSM 792 / JCM 1419 / IAM 19013 / LMG 5710 / NBRC 13948 / NRRL B-527 / VKM B-1787 / 2291 / W), this protein is NAD-dependent protein deacetylase.